Reading from the N-terminus, the 188-residue chain is Protein GrpE (188 aa).

Over residues 1–10 (MPDPTQNPNV) the composition is skewed to polar residues. The segment at 1–35 (MPDPTQNPNVTPELEQHAAPEAAAEAAPESSADVM) is disordered. Residues 19-32 (APEAAAEAAPESSA) are compositionally biased toward low complexity.

Belongs to the GrpE family. In terms of assembly, homodimer.

It is found in the cytoplasm. Its function is as follows. Participates actively in the response to hyperosmotic and heat shock by preventing the aggregation of stress-denatured proteins, in association with DnaK and GrpE. It is the nucleotide exchange factor for DnaK and may function as a thermosensor. Unfolded proteins bind initially to DnaJ; upon interaction with the DnaJ-bound protein, DnaK hydrolyzes its bound ATP, resulting in the formation of a stable complex. GrpE releases ADP from DnaK; ATP binding to DnaK triggers the release of the substrate protein, thus completing the reaction cycle. Several rounds of ATP-dependent interactions between DnaJ, DnaK and GrpE are required for fully efficient folding. This chain is Protein GrpE, found in Azoarcus sp. (strain BH72).